Here is a 337-residue protein sequence, read N- to C-terminus: Undecaprenyl-phosphate 4-deoxy-4-formamido-L-arabinose transferase (337 aa).

2 helical membrane-spanning segments follow: residues leucine 235–valine 255 and phenylalanine 270–leucine 290.

It belongs to the glycosyltransferase 2 family.

It is found in the cell inner membrane. It catalyses the reaction UDP-4-deoxy-4-formamido-beta-L-arabinose + di-trans,octa-cis-undecaprenyl phosphate = 4-deoxy-4-formamido-alpha-L-arabinopyranosyl di-trans,octa-cis-undecaprenyl phosphate + UDP. The protein operates within glycolipid biosynthesis; 4-amino-4-deoxy-alpha-L-arabinose undecaprenyl phosphate biosynthesis; 4-amino-4-deoxy-alpha-L-arabinose undecaprenyl phosphate from UDP-4-deoxy-4-formamido-beta-L-arabinose and undecaprenyl phosphate: step 1/2. It functions in the pathway bacterial outer membrane biogenesis; lipopolysaccharide biosynthesis. Functionally, catalyzes the transfer of 4-deoxy-4-formamido-L-arabinose from UDP to undecaprenyl phosphate. The modified arabinose is attached to lipid A and is required for resistance to polymyxin and cationic antimicrobial peptides. This is Undecaprenyl-phosphate 4-deoxy-4-formamido-L-arabinose transferase from Pseudomonas syringae pv. syringae (strain B728a).